The following is a 350-amino-acid chain: S-adenosylmethionine:tRNA ribosyltransferase-isomerase (350 aa).

It belongs to the QueA family. In terms of assembly, monomer.

The protein resides in the cytoplasm. The catalysed reaction is 7-aminomethyl-7-carbaguanosine(34) in tRNA + S-adenosyl-L-methionine = epoxyqueuosine(34) in tRNA + adenine + L-methionine + 2 H(+). The protein operates within tRNA modification; tRNA-queuosine biosynthesis. Transfers and isomerizes the ribose moiety from AdoMet to the 7-aminomethyl group of 7-deazaguanine (preQ1-tRNA) to give epoxyqueuosine (oQ-tRNA). The polypeptide is S-adenosylmethionine:tRNA ribosyltransferase-isomerase (Saccharophagus degradans (strain 2-40 / ATCC 43961 / DSM 17024)).